The chain runs to 109 residues: Nucleoid-associated protein CC_0268 (109 aa).

Belongs to the YbaB/EbfC family. In terms of assembly, homodimer.

Its subcellular location is the cytoplasm. It localises to the nucleoid. Its function is as follows. Binds to DNA and alters its conformation. May be involved in regulation of gene expression, nucleoid organization and DNA protection. This is Nucleoid-associated protein CC_0268 from Caulobacter vibrioides (strain ATCC 19089 / CIP 103742 / CB 15) (Caulobacter crescentus).